Here is a 556-residue protein sequence, read N- to C-terminus: Phenylalanine--tRNA ligase beta subunit (556 aa).

The B5 domain occupies 278 to 354; sequence LTPKEFEVSF…IAYGYNNIDP (77 aa). Mg(2+) is bound by residues Asp332, Asp338, Glu341, and Asp342.

The protein belongs to the phenylalanyl-tRNA synthetase beta subunit family. Type 2 subfamily. In terms of assembly, tetramer of two alpha and two beta subunits. Requires Mg(2+) as cofactor.

The protein localises to the cytoplasm. It carries out the reaction tRNA(Phe) + L-phenylalanine + ATP = L-phenylalanyl-tRNA(Phe) + AMP + diphosphate + H(+). The sequence is that of Phenylalanine--tRNA ligase beta subunit from Pyrococcus furiosus (strain ATCC 43587 / DSM 3638 / JCM 8422 / Vc1).